Consider the following 252-residue polypeptide: Triosephosphate isomerase (252 aa).

Position 9–11 (9–11 (NWK)) interacts with substrate. H96 functions as the Electrophile in the catalytic mechanism. E166 functions as the Proton acceptor in the catalytic mechanism. Residues G172, S212, and 233-234 (GG) contribute to the substrate site.

Belongs to the triosephosphate isomerase family. Homodimer.

It localises to the cytoplasm. It carries out the reaction D-glyceraldehyde 3-phosphate = dihydroxyacetone phosphate. It participates in carbohydrate biosynthesis; gluconeogenesis. The protein operates within carbohydrate degradation; glycolysis; D-glyceraldehyde 3-phosphate from glycerone phosphate: step 1/1. Its function is as follows. Involved in the gluconeogenesis. Catalyzes stereospecifically the conversion of dihydroxyacetone phosphate (DHAP) to D-glyceraldehyde-3-phosphate (G3P). This is Triosephosphate isomerase from Prosthecochloris aestuarii (strain DSM 271 / SK 413).